We begin with the raw amino-acid sequence, 461 residues long: MSRQVVRSSKFRHVFGQPAKADQCYEDVRVSQTTWDSGFCAVNPKFVALICEASGGGAFLVLPLGKTGRVDKNAPTVCGHTAPVLDIAWCPHNDNVIASGSEDCTVMVWEIPDGGLMLPLREPVVTLEGHTKRVGIVAWHTTAQNVLLSAGCDNVIMVWDVGTGAAMLTLGPEVHPDTIYSVDWSRDGGLICTSCRDKRVRIIEPRKGTVVAEKDRPHEGTRPVRAVFVSEGKILTTGFSRMSERQVALWDTKHLEEPLSLQELDTSSGVLLPFFDPDTNIVYLCGKGDSSIRYFEITSEAPFLHYLSMFSSKESQRGMGYMPKRGLEVNKCEIARFYKLHERRCEPIAMTVPRKSDLFQEDLYPPTAGPDPALTAEEWLGGRDAGPLLISLKDGYVPPKSRELRVNRGLDTGRRRAAPEASGTPSSDAVSRLEEEMRKLQATVQELQKRLDRLEETVQAK.

Residue S2 is modified to N-acetylserine. A Phosphoserine; by PKC modification is found at S2. WD repeat units lie at residues 13-63 (HVFG…LVLP), 73-110 (NAPT…MVWE), 123-160 (PVVT…MVWD), 164-204 (GAAM…RIIE), 207-251 (KGTV…ALWD), 258-296 (PLSL…RYFE), and 302-349 (PFLH…EPIA). Over residues 403-418 (ELRVNRGLDTGRRRAA) the composition is skewed to basic and acidic residues. Positions 403–432 (ELRVNRGLDTGRRRAAPEASGTPSSDAVSR) are disordered. T412 bears the Phosphothreonine; by PKC mark. S422 bears the Phosphoserine mark. Residues 424 to 460 (TPSSDAVSRLEEEMRKLQATVQELQKRLDRLEETVQA) adopt a coiled-coil conformation. K449 carries the N6-acetyllysine modification.

It belongs to the WD repeat coronin family. Binds actin. Post-translationally, phosphorylation at Thr-412 by PKC strongly down-regulates the association with actin. Polyubiquitinated by RNF128 with 'Lys-48'-linked chains, leading to proteasomal degradation. In terms of tissue distribution, expressed in brain, thymus, spleen, bone marrow and lymph node. Low in lung and gut.

The protein resides in the cytoplasm. It localises to the cytoskeleton. It is found in the cell cortex. The protein localises to the cytoplasmic vesicle. Its subcellular location is the phagosome membrane. In terms of biological role, may be a crucial component of the cytoskeleton of highly motile cells, functioning both in the invagination of large pieces of plasma membrane, as well as in forming protrusions of the plasma membrane involved in cell locomotion. In mycobacteria-infected cells, its retention on the phagosomal membrane prevents fusion between phagosomes and lysosomes. The sequence is that of Coronin-1A (CORO1A) from Homo sapiens (Human).